A 345-amino-acid chain; its full sequence is Phosphoribosylformylglycinamidine cyclo-ligase (345 aa).

Belongs to the AIR synthase family.

The protein localises to the cytoplasm. It carries out the reaction 2-formamido-N(1)-(5-O-phospho-beta-D-ribosyl)acetamidine + ATP = 5-amino-1-(5-phospho-beta-D-ribosyl)imidazole + ADP + phosphate + H(+). It functions in the pathway purine metabolism; IMP biosynthesis via de novo pathway; 5-amino-1-(5-phospho-D-ribosyl)imidazole from N(2)-formyl-N(1)-(5-phospho-D-ribosyl)glycinamide: step 2/2. This chain is Phosphoribosylformylglycinamidine cyclo-ligase, found in Shewanella woodyi (strain ATCC 51908 / MS32).